Here is a 677-residue protein sequence, read N- to C-terminus: Transcription factor IIIB 90 kDa subunit (677 aa).

The TFIIB-type zinc finger occupies 2-33; the sequence is TGRVCRGCGGTDIELDAARGDAVCTACGSVLE. Residues cysteine 6, cysteine 9, cysteine 25, and cysteine 28 each coordinate Zn(2+). 2 repeat units span residues 91-172 and 185-269. Disordered stretches follow at residues 340–368 and 385–413; these read KGGLASLAKDGSTEDTASSLCGEEDTEDE and LLGGAPGSSEAAGSPEWGGRPPALGSLLD. Threonine 365 is subject to Phosphothreonine. Serine 450 carries the post-translational modification Phosphoserine. Disordered regions lie at residues 501–521 and 544–653; these read YKEHKPKKSCKRREPIQASTA and RGLS…EDGE. Serine 553 is modified (phosphoserine). Positions 640–653 are enriched in acidic residues; it reads EEADEEEPDEEDGE.

The protein belongs to the TFIIB family. In terms of assembly, TFIIIB comprises at least the TATA-binding protein (TBP) and the B-related factor 1 (BRF1/TFIIIB90). Interacts with BDP1. Interacts with MAF1.

Its subcellular location is the nucleus. General activator of RNA polymerase which utilizes different TFIIIB complexes at structurally distinct promoters. The isoform 1 is involved in the transcription of tRNA, adenovirus VA1, 7SL and 5S RNA. Isoform 2 is required for transcription of the U6 promoter. This is Transcription factor IIIB 90 kDa subunit (BRF1) from Homo sapiens (Human).